Consider the following 331-residue polypeptide: tRNA-modifying protein YgfZ (331 aa).

Folate-binding residues include Trp-28 and Trp-191.

It belongs to the tRNA-modifying YgfZ family.

Its subcellular location is the cytoplasm. Folate-binding protein involved in regulating the level of ATP-DnaA and in the modification of some tRNAs. It is probably a key factor in regulatory networks that act via tRNA modification, such as initiation of chromosomal replication. This Edwardsiella ictaluri (strain 93-146) protein is tRNA-modifying protein YgfZ.